Consider the following 128-residue polypeptide: Profilin (128 aa).

It belongs to the profilin family.

More likely to influence phosphoinositide metabolism than actin assembly. The polypeptide is Profilin (Homo sapiens (Human)).